Reading from the N-terminus, the 621-residue chain is Chaperone protein HscA homolog (621 aa).

This sequence belongs to the heat shock protein 70 family.

Functionally, chaperone involved in the maturation of iron-sulfur cluster-containing proteins. Has a low intrinsic ATPase activity which is markedly stimulated by HscB. This chain is Chaperone protein HscA homolog, found in Cupriavidus pinatubonensis (strain JMP 134 / LMG 1197) (Cupriavidus necator (strain JMP 134)).